The primary structure comprises 537 residues: Lysine--tRNA ligase (537 aa).

The 'HIGH' region motif lies at 30–38; it reads PSGNIHIGN. Residues 276–280 carry the 'KMSKS' region motif; it reads AMSSS.

It belongs to the class-I aminoacyl-tRNA synthetase family.

It localises to the cytoplasm. The enzyme catalyses tRNA(Lys) + L-lysine + ATP = L-lysyl-tRNA(Lys) + AMP + diphosphate. The polypeptide is Lysine--tRNA ligase (Methanosarcina barkeri).